We begin with the raw amino-acid sequence, 100 residues long: NADH-quinone oxidoreductase subunit K 2 (100 aa).

3 helical membrane passes run 2–22 (LAIE…TIGV), 29–49 (IVIF…FIAF), and 61–81 (FVFF…ALMI).

It belongs to the complex I subunit 4L family. In terms of assembly, NDH-1 is composed of 14 different subunits. Subunits NuoA, H, J, K, L, M, N constitute the membrane sector of the complex.

Its subcellular location is the cell inner membrane. It catalyses the reaction a quinone + NADH + 5 H(+)(in) = a quinol + NAD(+) + 4 H(+)(out). In terms of biological role, NDH-1 shuttles electrons from NADH, via FMN and iron-sulfur (Fe-S) centers, to quinones in the respiratory chain. The immediate electron acceptor for the enzyme in this species is believed to be ubiquinone. Couples the redox reaction to proton translocation (for every two electrons transferred, four hydrogen ions are translocated across the cytoplasmic membrane), and thus conserves the redox energy in a proton gradient. In Citrifermentans bemidjiense (strain ATCC BAA-1014 / DSM 16622 / JCM 12645 / Bem) (Geobacter bemidjiensis), this protein is NADH-quinone oxidoreductase subunit K 2.